Here is a 225-residue protein sequence, read N- to C-terminus: J-type co-chaperone jac1, mitochondrial (225 aa).

A mitochondrion-targeting transit peptide spans 1-49 (MLKQAGNQSFRPFISFAQKSLFNRQITGNHWIFARFKFYPLNKIVNYNH). Residues 61 to 137 (NFYKQFEGDI…LTRAEYILQL (77 aa)) form the J domain. Positions 98–100 (HPD) match the HSP70 binding motif.

Belongs to the HscB family. Interacts with ssc1.

It is found in the mitochondrion matrix. Functionally, co-chaperone required for the assembly of iron-sulfur (Fe/S) clusters in mitochondria. Stimulates the ATPase activity of the mitochondrial Hsp70 chaperone ssc1, to mediate the transfer of iron-sulfur clusters from isu1 to grx5. The sequence is that of J-type co-chaperone jac1, mitochondrial from Schizosaccharomyces pombe (strain 972 / ATCC 24843) (Fission yeast).